A 50-amino-acid chain; its full sequence is Defensin D1 (50 aa).

4 cysteine pairs are disulfide-bonded: C3-C50, C14-C35, C20-C44, and C24-C46.

Contains 4 disulfide bonds.

The protein localises to the secreted. Its function is as follows. Antimicrobial peptide active against fungi, Gram-positive and Gram-negative bacteria. Inhibits growth of hyphae in the fungi A.niger (IC(50)=3.5 ug/ml), B.sorokiniana (IC(50)=3.0 ug/ml), F.oxysporum (IC(50)=9.5 ug/ml), F.graminearum (IC(50)=6.9 ug/ml), F.culmorum (IC(50)=6.9 ug/ml) and B.cinerea (IC(50)=27.4 ug/ml). Has no effect on spore germination. Destroys spores in germinated conidia by disruption of cell walls and membranes in A.niger and B.sorokiniana. Causes vacuolization of germinated macro- and microconidia in F.oxysporum, F.graminearum and F.culmorum. Strongly inhibits growth of P.infestans on potato tubers above concentrations of 13.6 ug/ml. Inhibits growth of Gram-positive bacteria C.michiganensis and B.subtilis and of Gram-negative bacteria P.syringae, E.carotovora and E.coli. This Nigella sativa (Black cumin) protein is Defensin D1.